The sequence spans 640 residues: Envelope glycoprotein (640 aa).

The signal sequence occupies residues methionine 1–serine 32. At valine 33–leucine 582 the chain is on the extracellular side. Asparagine 43 and asparagine 58 each carry an N-linked (GlcNAc...) asparagine; by host glycan. Intrachain disulfides connect cysteine 109–cysteine 126 and cysteine 118–cysteine 131. Asparagine 297 carries an N-linked (GlcNAc...) asparagine; by host glycan. Disulfide bonds link cysteine 307-cysteine 310, cysteine 307-cysteine 535, cysteine 337-cysteine 391, cysteine 356-cysteine 368, cysteine 398-cysteine 411, and cysteine 527-cysteine 534. The CXXC signature appears at cysteine 307–cysteine 310. N-linked (GlcNAc...) asparagine; by host glycosylation is found at asparagine 329 and asparagine 336. Residue asparagine 369 is glycosylated (N-linked (GlcNAc...) asparagine; by host). Residues valine 444–valine 464 form a fusion peptide region. Positions alanine 473–valine 509 form a coiled coil. Positions leucine 510 to leucine 526 are immunosuppression. A CX6CC motif is present at residues cysteine 527–cysteine 535. The helical transmembrane segment at isoleucine 583–isoleucine 603 threads the bilayer. The Cytoplasmic segment spans residues leucine 604–glutamate 640. A YXXL motif; contains endocytosis signal motif is present at residues tyrosine 627–leucine 630.

In terms of assembly, the mature envelope protein (Env) consists of a trimer of SU-TM heterodimers attached by a labile interchain disulfide bond. Post-translationally, specific enzymatic cleavages in vivo yield mature proteins. Envelope glycoproteins are synthesized as an inactive precursor that is N-glycosylated and processed likely by host cell furin or by a furin-like protease in the Golgi to yield the mature SU and TM proteins. The cleavage site between SU and TM requires the minimal sequence [KR]-X-[KR]-R. The R-peptide is released from the C-terminus of the cytoplasmic tail of the TM protein upon particle formation as a result of proteolytic cleavage by the viral protease. Cleavage of this peptide is required for TM to become fusogenic. In terms of processing, the CXXC motif is highly conserved across a broad range of retroviral envelope proteins. It is thought to participate in the formation of a labile disulfide bond possibly with the CX6CC motif present in the transmembrane protein. Isomerization of the intersubunit disulfide bond to an SU intrachain disulfide bond is thought to occur upon receptor recognition in order to allow membrane fusion. The R-peptide is palmitoylated.

Its subcellular location is the virion membrane. The protein resides in the host cell membrane. Its function is as follows. The surface protein (SU) attaches the virus to the host cell by binding to its receptor. This interaction triggers the refolding of the transmembrane protein (TM) and is thought to activate its fusogenic potential by unmasking its fusion peptide. Fusion occurs at the host cell plasma membrane. The transmembrane protein (TM) acts as a class I viral fusion protein. Under the current model, the protein has at least 3 conformational states: pre-fusion native state, pre-hairpin intermediate state, and post-fusion hairpin state. During viral and target cell membrane fusion, the coiled coil regions (heptad repeats) assume a trimer-of-hairpins structure, positioning the fusion peptide in close proximity to the C-terminal region of the ectodomain. The formation of this structure appears to drive apposition and subsequent fusion of viral and target cell membranes. Membranes fusion leads to delivery of the nucleocapsid into the cytoplasm. The sequence is that of Envelope glycoprotein (env) from Mus musculus (Mouse).